The following is a 292-amino-acid chain: Homeobox-leucine zipper protein HOX19 (292 aa).

Disordered regions lie at residues 14-85 (LALG…HSVS), 99-133 (RERAEEADGERVSSTAAGRDDDDDGSTRKKLRLTK), and 217-236 (FAPPPPSSAAHQPSPAPPAP). Low complexity predominate over residues 28–74 (TDAAAAHRGGCRRPSPSSQCPPLEPSLTLSLPDDAAAGAAATATATA). The segment covering 99-109 (RERAEEADGER) has biased composition (basic and acidic residues). Positions 124–183 (STRKKLRLTKEQSALLEDRFREHSTLNPKQKVALAKQLNLRPRQVEVWFQNRRARTKLKQ) form a DNA-binding region, homeobox. A leucine-zipper region spans residues 182 to 226 (KQTEVDCEFLKRCCETLTEENRRLQRELQELRALKFAPPPPSSAA).

It belongs to the HD-ZIP homeobox family. Class II subfamily. As to expression, expressed in seedlings, roots, stems, leaf sheaths and blades and panicles.

It localises to the nucleus. Probable transcription factor. In Oryza sativa subsp. japonica (Rice), this protein is Homeobox-leucine zipper protein HOX19 (HOX19).